A 1350-amino-acid chain; its full sequence is ABC-type transporter MDR1 (1350 aa).

Over residues 1-11 (MDTVHEGHHGS) the composition is skewed to basic and acidic residues. The interval 1 to 84 (MDTVHEGHHG…DEGEDPFAHL (84 aa)) is disordered. A compositionally biased stretch (polar residues) spans 22 to 33 (VEVTNYEKTQLG). The segment covering 52–63 (KKHKSQKEKKHK) has biased composition (basic residues). The ABC transmembrane type-1 1 domain maps to 121–411 (VLSALSSIIG…VAPNIQAFTT (291 aa)). 6 consecutive transmembrane segments (helical) span residues 124–144 (ALSSIIGGALLPLMTIVFGGL), 170–190 (LYFLYLAIGEFVFVYIATAGF), 243–263 (KVGLTLTALATFITAFVVSFI), 271–291 (ILMSTVFAIVFTMGGMSGFIV), 350–370 (GSMIGFLMCYVYLNYSLAFWM), and 380–400 (IEVGDVLTIILSIMIGAFALG). One can recognise an ABC transporter 1 domain in the interval 446–691 (IELRNIRHIY…QGAYYNLVEA (246 aa)). 481–488 (GESGSGKS) contacts ATP. The segment covering 712 to 731 (KDQNLKHETTKGEQPEDGLK) has biased composition (basic and acidic residues). Positions 712–734 (KDQNLKHETTKGEQPEDGLKLAR) are disordered. Helical transmembrane passes span 779–799 (IGIICSVITGGGNPTQAVFFA), 830–850 (FMLALVQFSAFLIQGYVFAVC), 903–923 (LGTILSVIVTLVAAFSVSLAI), 929–949 (LVCISTVPILLACGFLRFWML), 1014–1034 (ASQSLIFCCTALGFWYGGTLI), and 1044–1064 (FFLCFSAVIFGAQSAGTIFSF). The ABC transmembrane type-1 2 domain occupies 779-1070 (IGIICSVITG…IFSFAPDMGK (292 aa)). The 239-residue stretch at 1105 to 1343 (IEFRDVHFRY…RGRYWELVNL (239 aa)) folds into the ABC transporter 2 domain. Asn-1127 is a glycosylation site (N-linked (GlcNAc...) asparagine). 1140-1147 (GASGCGKS) lines the ATP pocket.

It belongs to the ABC transporter superfamily. ABCB family. Multidrug resistance exporter (TC 3.A.1.201) subfamily.

Its subcellular location is the cell membrane. In terms of biological role, ABC-type transporter that is involved in the secretion of liamocins, glycolipids (also called heavy oils) composed of a single mannitol or arabitol headgroup linked to either three, four or even six 3,5-dihydroxydecanoic ester tail-groups. The sequence is that of ABC-type transporter MDR1 from Aureobasidium melanogenum (Aureobasidium pullulans var. melanogenum).